A 538-amino-acid chain; its full sequence is Cytochrome P450 monooxygenase cfoH (538 aa).

The helical transmembrane segment at 24–44 (VLTFFAILLVAILLWYMIPYF) threads the bilayer. A heme-binding site is contributed by Cys471.

It belongs to the cytochrome P450 family. The cofactor is heme.

It is found in the membrane. Its pathway is secondary metabolite biosynthesis; flavonoid biosynthesis. Cytochrome P450 monooxygenase; part of the gene cluster that mediates the biosynthesis of chlorflavonin, a fungal flavonoid with acetolactate synthase inhibitory activity. Within the pathway, cfoH is responsible for the hydroxylation of the flavonoid skeleton at position C2'. The pathway begins with the PKS-NRPS hybrid synthetase cfoA that uses benzoic acid or p-hydroxybenzoic acid as a starter unit with four rounds of chain elongation using malonyl-CoA to form the chalcone skeleton. Then, a new type of chalcone isomerase, cfoK, catalyzes the conversion of the chalcone into a flavanone by a histidine-mediated oxa-Michael addition mechanism. The desaturation of flavanone to flavone is catalyzed by a new type of flavone synthase, the flavin mononucleotide (FMN)-dependent oxidoreductase cfoJ. Monooxygenases cfoF, cfoG, and P450 cfoH are responsible for the hydroxylation of the flavonoid skeleton at sites C3, C8, and C2', respectively. Like cfoF, the dehydratase cfoI plays also a role in the hydroxylation of position C3. Methyltransferases cfoB, cfoC, and cfoD then catalyze the methylation of C7-OH, C8-OH, and C3-OH, respectively. Finally, the monooxygenase cfoE is responsible for the chlorination of flavonoid at position C3'. The protein is Cytochrome P450 monooxygenase cfoH of Aspergillus candidus.